A 365-amino-acid polypeptide reads, in one-letter code: Caffeic acid 3-O-methyltransferase (365 aa).

Met130–Leu136 is a substrate binding site. A substrate binding region spans residues Ala162–Met180. The S-adenosyl-L-methionine site is built by Gly208, Asp231, Asp251, Met252, and Lys265. Catalysis depends on His269, which acts as the Proton acceptor.

It belongs to the class I-like SAM-binding methyltransferase superfamily. Cation-independent O-methyltransferase family. COMT subfamily. Homodimer.

The catalysed reaction is (E)-caffeate + S-adenosyl-L-methionine = (E)-ferulate + S-adenosyl-L-homocysteine + H(+). It participates in aromatic compound metabolism; phenylpropanoid biosynthesis. In terms of biological role, catalyzes the conversion of caffeic acid to ferulic acid and of 5-hydroxyferulic acid to sinapic acid. The resulting products may subsequently be converted to the corresponding alcohols that are incorporated into lignins. The polypeptide is Caffeic acid 3-O-methyltransferase (COMT1) (Prunus dulcis (Almond)).